Consider the following 497-residue polypeptide: Aspartyl/glutamyl-tRNA(Asn/Gln) amidotransferase subunit B (497 aa).

The protein belongs to the GatB/GatE family. GatB subfamily. In terms of assembly, heterotrimer of A, B and C subunits.

The enzyme catalyses L-glutamyl-tRNA(Gln) + L-glutamine + ATP + H2O = L-glutaminyl-tRNA(Gln) + L-glutamate + ADP + phosphate + H(+). It catalyses the reaction L-aspartyl-tRNA(Asn) + L-glutamine + ATP + H2O = L-asparaginyl-tRNA(Asn) + L-glutamate + ADP + phosphate + 2 H(+). Allows the formation of correctly charged Asn-tRNA(Asn) or Gln-tRNA(Gln) through the transamidation of misacylated Asp-tRNA(Asn) or Glu-tRNA(Gln) in organisms which lack either or both of asparaginyl-tRNA or glutaminyl-tRNA synthetases. The reaction takes place in the presence of glutamine and ATP through an activated phospho-Asp-tRNA(Asn) or phospho-Glu-tRNA(Gln). The sequence is that of Aspartyl/glutamyl-tRNA(Asn/Gln) amidotransferase subunit B from Nocardioides sp. (strain ATCC BAA-499 / JS614).